We begin with the raw amino-acid sequence, 354 residues long: Uroporphyrinogen decarboxylase (354 aa).

Substrate is bound by residues 27-31, Asp-77, Tyr-154, Thr-209, and His-327; that span reads RQAGR.

It belongs to the uroporphyrinogen decarboxylase family. Homodimer.

It is found in the cytoplasm. It carries out the reaction uroporphyrinogen III + 4 H(+) = coproporphyrinogen III + 4 CO2. It participates in porphyrin-containing compound metabolism; protoporphyrin-IX biosynthesis; coproporphyrinogen-III from 5-aminolevulinate: step 4/4. Its function is as follows. Catalyzes the decarboxylation of four acetate groups of uroporphyrinogen-III to yield coproporphyrinogen-III. This is Uroporphyrinogen decarboxylase from Mannheimia succiniciproducens (strain KCTC 0769BP / MBEL55E).